The following is a 146-amino-acid chain: Flagellar assembly factor FliW (146 aa).

It belongs to the FliW family. As to quaternary structure, interacts with translational regulator CsrA and flagellin(s).

The protein resides in the cytoplasm. Functionally, acts as an anti-CsrA protein, binds CsrA and prevents it from repressing translation of its target genes, one of which is flagellin. Binds to flagellin and participates in the assembly of the flagellum. This chain is Flagellar assembly factor FliW, found in Shouchella clausii (strain KSM-K16) (Alkalihalobacillus clausii).